We begin with the raw amino-acid sequence, 141 residues long: MKENDVVLRTVTKLVVFILLTFGFYVFFAGHNNPGGGFIGGLIFSSAFILMFLAFNVEEVLESLPIDFRILMIIGALVSSITAIIPMFFGKPFLSQYETTWILPILGQIHVSTITLFELGILFSVVGVIVTVMLSLSGGRS.

The next 4 helical transmembrane spans lie at 10 to 30 (TVTK…FFAG), 35 to 55 (GGGF…FLAF), 70 to 90 (ILMI…MFFG), and 114 to 134 (ITLF…TVML).

Belongs to the CPA3 antiporters (TC 2.A.63) subunit B family. As to quaternary structure, may form a heterooligomeric complex that consists of seven subunits: mnhA2, mnhB2, mnhC2, mnhD2, mnhE2, mnhF2 and mnhG2.

The protein resides in the cell membrane. In Staphylococcus aureus (strain Mu3 / ATCC 700698), this protein is Putative antiporter subunit mnhB2 (mnhB2).